Consider the following 320-residue polypeptide: Bifunctional protein FolD 2 (320 aa).

NADP(+) contacts are provided by residues 173 to 175 and Ile-242; that span reads GRS.

The protein belongs to the tetrahydrofolate dehydrogenase/cyclohydrolase family. In terms of assembly, homodimer.

The catalysed reaction is (6R)-5,10-methylene-5,6,7,8-tetrahydrofolate + NADP(+) = (6R)-5,10-methenyltetrahydrofolate + NADPH. The enzyme catalyses (6R)-5,10-methenyltetrahydrofolate + H2O = (6R)-10-formyltetrahydrofolate + H(+). The protein operates within one-carbon metabolism; tetrahydrofolate interconversion. Catalyzes the oxidation of 5,10-methylenetetrahydrofolate to 5,10-methenyltetrahydrofolate and then the hydrolysis of 5,10-methenyltetrahydrofolate to 10-formyltetrahydrofolate. The sequence is that of Bifunctional protein FolD 2 from Rubrobacter xylanophilus (strain DSM 9941 / JCM 11954 / NBRC 16129 / PRD-1).